We begin with the raw amino-acid sequence, 147 residues long: Sec-independent protein translocase protein TatB (147 aa).

A helical membrane pass occupies residues 1 to 21 (MFDVSFTELMVIGVIALVVIG). The disordered stretch occupies residues 67–147 (DETARSMQTS…DKTPPTGSAT (81 aa)). Residues 93-103 (AELDDTARDAS) are compositionally biased toward basic and acidic residues. 2 stretches are compositionally biased toward low complexity: residues 109–120 (ADAPAEPAPAVA) and 129–147 (APPAAATPADKTPPTGSAT).

The protein belongs to the TatB family. In terms of assembly, the Tat system comprises two distinct complexes: a TatABC complex, containing multiple copies of TatA, TatB and TatC subunits, and a separate TatA complex, containing only TatA subunits. Substrates initially bind to the TatABC complex, which probably triggers association of the separate TatA complex to form the active translocon.

It localises to the cell inner membrane. Part of the twin-arginine translocation (Tat) system that transports large folded proteins containing a characteristic twin-arginine motif in their signal peptide across membranes. Together with TatC, TatB is part of a receptor directly interacting with Tat signal peptides. TatB may form an oligomeric binding site that transiently accommodates folded Tat precursor proteins before their translocation. In Bordetella pertussis (strain Tohama I / ATCC BAA-589 / NCTC 13251), this protein is Sec-independent protein translocase protein TatB.